The following is a 598-amino-acid chain: MSFITSAHATAAQVPLTTSQMLGQKLMLDFRYYCGESKKPSGDCRAAMTTLPPELSELISRYDIGGAILFAENVQNTAQIISLTNALQSAAQQSKSQLPLFIAIDQEGGRVARINREQATSFTGNMSIGATYPKQGDIYATKVASAIGKELNSLGINVNFAPTVDVNSNPNNPVINVRSFSENPTVVTKLGLAQVKAFEAAGVLSALKHFPGHGDTHVDSHTGLPRVDHDRDKINQQDLLPFAEIIKASPPGMIMTAHIQYPALDNSKVVNSQGESMIRPATMSYQIMTQLLRHELGYQGVTVTDALDMAGISDFFNPVDATIETFNAGVDIALMPIAIRNRADIKRFEQYMAQLADALETNKLNQEQLSSSMARIAKLKTKLPQSSASLAIANSTLGNPSHRRLEAELALAAITEVKNDGVLPLRDNAQVVHLIMPDRQKCFALEQALQTYSKNSLTLSCTSLQAYDPDIAHDAIKQADMIIAAHASPPQSAVEIGGMDDVKKLREHGVARNVQPAALKALLQYGQQQGKKQLFISLRAPYEISTFGPLSNAVLASYAYNVDVNHDKKVAGPAYTALAKVILGIAKAEGSLPVTVNH.

An N-terminal signal peptide occupies residues methionine 1 to alanine 11. Residue aspartate 305 is part of the active site.

It belongs to the glycosyl hydrolase 3 family.

It catalyses the reaction Hydrolysis of terminal non-reducing N-acetyl-D-hexosamine residues in N-acetyl-beta-D-hexosaminides.. In terms of biological role, most active towards p-nitrophenyl-N-acetyl-beta-D-glucosaminide(PNP-beta-GlcNAc) and diacetylchitobiose. In Pseudoalteromonas piscicida, this protein is Beta-hexosaminidase A (cht60).